The following is a 118-amino-acid chain: UPF0102 protein CMM_1377 (118 aa).

Belongs to the UPF0102 family.

The chain is UPF0102 protein CMM_1377 from Clavibacter michiganensis subsp. michiganensis (strain NCPPB 382).